The sequence spans 261 residues: MSGLDDGLENPVLIQEYSRQGRATAAPAPLVLFHDGGGTLFSYFFLESLGRDVFGFADPRATSGQQWKDGITEMAIHYYKRMKMEIRPGSVILGGWSFGGLLALQLAQMIASDSAGGFEVVGVVLIDTSCPEKASYSSTVANGPIVPFRDDVPDCMQEIVRTSMVRNTEMLSQWEAPTWPQGYSKPPILLLRAAEGIDAKEERSLKLGWELCQHDVIDSVEMVPGNHYSLFESDNIGTLSSRLRESCKRMETPYRKAASSD.

It belongs to the AMT4 thioesterase family.

It participates in mycotoxin biosynthesis. Functionally, thioesterase; part of the gene clusters that mediate the biosynthesis of AM-toxins, host-selective toxins (HSTs) causing Alternaria blotch on apple, a worldwide distributed disease. AM-toxins are cyclic depsipeptides containing the 3 residues 2-hydroxy-isovaleric acid (2-HIV), dehydroalanine, L-alanine which are common for all 3 AM-toxins I to III. The fourth precursor is L-alpha-amino-methoxyphenyl-valeric acid (L-Amv) for AM-toxin I, L-alpha-amino-phenyl-valeric acid (L-Apv) for AM-toxin II, and L-alpha-amino-hydroxyphenyl-valeric acid (L-Ahv) for AM-toxin III. AM-toxins have two target sites for affecting susceptible apple cells; they cause invagination of the plasma membrane and electrolyte loss and chloroplast disorganization. The non-ribosomal peptide synthetase AMT1 contains 4 catalytic modules and is responsible for activation of each residue in AM-toxin. The aldo-keto reductase AMT2 catalyzes the conversion of 2-keto-isovaleric acid (2-KIV) to 2-hydroxy-isovaleric acid (2-HIV), one of the precursor residues incorporated by AMT1 during AM-toxin biosynthesis, by reduction of its ketone to an alcohol. The cytochrome P450 monooxygenase AMT3 and the thioesterase AMT4 are also important for AM-toxin production, but their exact function within the AM-toxin biosynthesis are not known yet. Up to 21 proteins (including AMT1 to AMT4) are predicted to be involved in AM-toxin biosynthesis since their expression ishighly up-regulated in AM-toxin-producing cultures. In Alternaria alternata (Alternaria rot fungus), this protein is Thioesterase AMT4.